The sequence spans 368 residues: Probable dual-specificity RNA methyltransferase RlmN (368 aa).

Glutamate 100 acts as the Proton acceptor in catalysis. One can recognise a Radical SAM core domain in the interval 106-344 (QHYGLSVCVT…CVVRQEHGTD (239 aa)). Cysteines 113 and 349 form a disulfide. Cysteine 120, cysteine 124, and cysteine 127 together coordinate [4Fe-4S] cluster. Residues 172–173 (GE), serine 204, 227–229 (SLH), and asparagine 305 each bind S-adenosyl-L-methionine. Residue cysteine 349 is the S-methylcysteine intermediate of the active site.

The protein belongs to the radical SAM superfamily. RlmN family. [4Fe-4S] cluster is required as a cofactor.

The protein localises to the cytoplasm. The enzyme catalyses adenosine(2503) in 23S rRNA + 2 reduced [2Fe-2S]-[ferredoxin] + 2 S-adenosyl-L-methionine = 2-methyladenosine(2503) in 23S rRNA + 5'-deoxyadenosine + L-methionine + 2 oxidized [2Fe-2S]-[ferredoxin] + S-adenosyl-L-homocysteine. It catalyses the reaction adenosine(37) in tRNA + 2 reduced [2Fe-2S]-[ferredoxin] + 2 S-adenosyl-L-methionine = 2-methyladenosine(37) in tRNA + 5'-deoxyadenosine + L-methionine + 2 oxidized [2Fe-2S]-[ferredoxin] + S-adenosyl-L-homocysteine. Its function is as follows. Specifically methylates position 2 of adenine 2503 in 23S rRNA and position 2 of adenine 37 in tRNAs. The sequence is that of Probable dual-specificity RNA methyltransferase RlmN from Streptococcus agalactiae serotype Ia (strain ATCC 27591 / A909 / CDC SS700).